The sequence spans 189 residues: MATANKNLSNYDKNTIPNAKNFRFGIVISEWNDHITEGLYSGVIEALTDCGALHKNIIRWNVPGSFELIYGAKKMIETQKPDVVITIGCVIKGETMHFEFVCEGVTQGIKDLNVLSDIPTIFCLLTDNTEQQSIDRSGGTHGNKGTEAAIAAIKMAYLREQANLGFHQSDKLLKTNQLQIEGLPLKIQE.

Residues tryptophan 31, serine 65–glutamate 67, and cysteine 89–isoleucine 91 each bind 5-amino-6-(D-ribitylamino)uracil. Residue glutamate 94–threonine 95 participates in (2S)-2-hydroxy-3-oxobutyl phosphate binding. Histidine 97 serves as the catalytic Proton donor. Residue phenylalanine 122 coordinates 5-amino-6-(D-ribitylamino)uracil. Residue arginine 136 participates in (2S)-2-hydroxy-3-oxobutyl phosphate binding.

The protein belongs to the DMRL synthase family.

It carries out the reaction (2S)-2-hydroxy-3-oxobutyl phosphate + 5-amino-6-(D-ribitylamino)uracil = 6,7-dimethyl-8-(1-D-ribityl)lumazine + phosphate + 2 H2O + H(+). The protein operates within cofactor biosynthesis; riboflavin biosynthesis; riboflavin from 2-hydroxy-3-oxobutyl phosphate and 5-amino-6-(D-ribitylamino)uracil: step 1/2. Its function is as follows. Catalyzes the formation of 6,7-dimethyl-8-ribityllumazine by condensation of 5-amino-6-(D-ribitylamino)uracil with 3,4-dihydroxy-2-butanone 4-phosphate. This is the penultimate step in the biosynthesis of riboflavin. This Flavobacterium psychrophilum (strain ATCC 49511 / DSM 21280 / CIP 103535 / JIP02/86) protein is 6,7-dimethyl-8-ribityllumazine synthase.